We begin with the raw amino-acid sequence, 2080 residues long: Fatty acid synthase beta subunit TOXC (2080 aa).

One can recognise a Starter acyltransferase (SAT) domain in the interval 170–397 (GRYFDELREL…LYRFNLLLRK (228 aa)). Serine 276 functions as the For acetyltransferase activity in the catalytic mechanism. The enoyl reductase (ER) domain stretch occupies residues 585 to 830 (SRLLGLPPIM…VIVETEGLND (246 aa)). Positions 1155 to 1644 (GKSRSWRHAI…LPNQKLEVKL (490 aa)) are dehydratase (DH) domain. A MaoC-like domain is found at 1544 to 1662 (SVDFEDPVSV…MIRLHIEARA (119 aa)). The Malonyl-CoA:ACP transacylase (MAT) domain occupies 1682–2046 (TYVFTGQGSQ…FQYVYDLTGS (365 aa)). Residues 1683-2046 (YVFTGQGSQE…FQYVYDLTGS (364 aa)) are malonyl/palmitoyl transferase (MT/PT) domain. The For malonyltransferase activity role is filled by serine 1828.

This sequence belongs to the fungal fatty acid synthetase subunit beta family.

The catalysed reaction is acetyl-CoA + n malonyl-CoA + 2n NADPH + 4n H(+) = a long-chain-acyl-CoA + n CoA + n CO2 + 2n NADP(+).. It catalyses the reaction holo-[ACP] + acetyl-CoA = acetyl-[ACP] + CoA. It carries out the reaction holo-[ACP] + malonyl-CoA = malonyl-[ACP] + CoA. The enzyme catalyses a (3R)-hydroxyacyl-[ACP] = a (2E)-enoyl-[ACP] + H2O. The catalysed reaction is a 2,3-saturated acyl-[ACP] + NAD(+) = a (2E)-enoyl-[ACP] + NADH + H(+). It catalyses the reaction (9Z)-octadecenoyl-[ACP] + H2O = (9Z)-octadecenoate + holo-[ACP] + H(+). Its pathway is mycotoxin biosynthesis; HC-toxin biosynthesis. Its function is as follows. Fatty acid synthase beta subunit, part of the diffuse TOX2 gene cluster that mediates the biosynthesis of the HC-toxin, cyclic tetrapeptide of structure cyclo(D-Pro-L-Ala-D-Ala-L-Aeo), where Aeo stands for 2-amino-9,10-epoxi-8-oxodecanoic acid. HC-toxin is a determinant of specificity and virulence in the interaction between the producing fungus and its host, maize. TOXC contribute to the synthesis of the decanoic backbone of 2-amino-9,10-epoxi-8-oxodecanoic acid, an essential precursor for the production of the major forms of HC-toxin by the non-ribosomal peptide synthetase HTS1. This is Fatty acid synthase beta subunit TOXC from Cochliobolus carbonum (Maize leaf spot fungus).